A 541-amino-acid chain; its full sequence is Chaperonin GroEL 1 (541 aa).

Residues 29 to 32 (TLGP), 86 to 90 (DGTTT), Gly-413, 479 to 481 (NAA), and Asp-495 contribute to the ATP site.

This sequence belongs to the chaperonin (HSP60) family. In terms of assembly, forms a cylinder of 14 subunits composed of two heptameric rings stacked back-to-back. Interacts with the co-chaperonin GroES.

It is found in the cytoplasm. It carries out the reaction ATP + H2O + a folded polypeptide = ADP + phosphate + an unfolded polypeptide.. In terms of biological role, together with its co-chaperonin GroES, plays an essential role in assisting protein folding. The GroEL-GroES system forms a nano-cage that allows encapsulation of the non-native substrate proteins and provides a physical environment optimized to promote and accelerate protein folding. This is Chaperonin GroEL 1 from Synechocystis sp. (strain ATCC 27184 / PCC 6803 / Kazusa).